The chain runs to 422 residues: Telomerase-associated protein of 50 kDa (422 aa).

As to quaternary structure, component of the telomerase holoenzyme complex, composed of the catalytic core (the catalytic subunit TERT, the telomerase RNA template component TER and TAP65/p65), which is associated with two heterotrimeric subcomplexes: (i) the replication protein A (RPA)-related subcomplex, composed of TEB1, RPA2/TEB2 and RPA3/TEB3 and (ii) the CST-like subcomplex, composed of TAP75/p75, TAP45/p45 and TAP19/p19. TEB1 and the CST-like subcomplex are tethered to the catalytic core by TAP50/p50.

The protein localises to the chromosome. The protein resides in the telomere. In terms of biological role, tethering component of the holoenzyme telomerase ribonucleoprotein (RNP) complex. Telomerase is an essential ribonucleoprotein enzyme that copies new telomeric repeats onto chromosome ends by repetitively synthesizing the short telomere-repeat sequence 5'-TTGGGG-3' using an RNA template component TER. In the telomerase holoenzyme complex, acts as a hub that anchors the two heterotrimeric subcomplexes with the catalytic core. This is Telomerase-associated protein of 50 kDa from Tetrahymena thermophila (strain SB210).